The primary structure comprises 205 residues: Outer-membrane lipoprotein LolB (205 aa).

The N-terminal stretch at 1-17 is a signal peptide; that stretch reads MFLRHCITFTLIALLAG. Cys18 is lipidated: N-palmitoyl cysteine. Cys18 is lipidated: S-diacylglycerol cysteine.

It belongs to the LolB family. As to quaternary structure, monomer.

It is found in the cell outer membrane. Plays a critical role in the incorporation of lipoproteins in the outer membrane after they are released by the LolA protein. The chain is Outer-membrane lipoprotein LolB from Pseudomonas putida (strain GB-1).